We begin with the raw amino-acid sequence, 349 residues long: tRNA-specific 2-thiouridylase MnmA (349 aa).

Residues Gly-7–Ser-14 and Leu-33 each bind ATP. Residue Cys-94 is the Nucleophile of the active site. Cys-94 and Cys-193 are disulfide-bonded. An ATP-binding site is contributed by Gly-119. Residues Lys-143–Gln-145 are interaction with tRNA. Cys-193 acts as the Cysteine persulfide intermediate in catalysis. The interval Arg-298–Tyr-299 is interaction with tRNA.

This sequence belongs to the MnmA/TRMU family.

It localises to the cytoplasm. It catalyses the reaction S-sulfanyl-L-cysteinyl-[protein] + uridine(34) in tRNA + AH2 + ATP = 2-thiouridine(34) in tRNA + L-cysteinyl-[protein] + A + AMP + diphosphate + H(+). In terms of biological role, catalyzes the 2-thiolation of uridine at the wobble position (U34) of tRNA, leading to the formation of s(2)U34. This is tRNA-specific 2-thiouridylase MnmA from Gloeothece citriformis (strain PCC 7424) (Cyanothece sp. (strain PCC 7424)).